The following is a 67-amino-acid chain: UPF0434 protein Tcr_0959 (67 aa).

The protein belongs to the UPF0434 family.

The protein is UPF0434 protein Tcr_0959 of Hydrogenovibrio crunogenus (strain DSM 25203 / XCL-2) (Thiomicrospira crunogena).